Reading from the N-terminus, the 75-residue chain is Putative antitoxin PH1062.1 (75 aa).

The protein belongs to the UPF0330 family.

Functionally, possibly the antitoxin component of a type II toxin-antitoxin (TA) system. This chain is Putative antitoxin PH1062.1, found in Pyrococcus horikoshii (strain ATCC 700860 / DSM 12428 / JCM 9974 / NBRC 100139 / OT-3).